Consider the following 136-residue polypeptide: Small ribosomal subunit protein uS11c (136 aa).

Residues Met1–Lys22 form a disordered region.

Belongs to the universal ribosomal protein uS11 family. As to quaternary structure, part of the 30S ribosomal subunit.

The protein localises to the plastid. The protein resides in the chloroplast. The polypeptide is Small ribosomal subunit protein uS11c (Lactuca sativa (Garden lettuce)).